The primary structure comprises 457 residues: Multidrug resistance protein MdtK (457 aa).

A run of 12 helical transmembrane segments spans residues 11-31 (LSAL…MGVV), 53-73 (IWLP…PVVA), 93-113 (FLAA…EYAI), 127-147 (AIGY…YQVL), 159-179 (PGMM…YIFI), 190-210 (GVGC…LMML), 249-269 (LLFE…LGVV), 276-296 (IALN…VATT), 313-333 (IAAH…AIFT), 357-377 (LMLL…GTGV), 387-407 (IFYI…YLLA), and 417-437 (GPAG…VMMV).

Belongs to the multi antimicrobial extrusion (MATE) (TC 2.A.66.1) family. MdtK subfamily.

It is found in the cell inner membrane. Functionally, multidrug efflux pump that functions probably as a Na(+)/drug antiporter. The polypeptide is Multidrug resistance protein MdtK (Pectobacterium atrosepticum (strain SCRI 1043 / ATCC BAA-672) (Erwinia carotovora subsp. atroseptica)).